A 289-amino-acid polypeptide reads, in one-letter code: Pantoate kinase (289 aa).

The protein belongs to the GHMP kinase family. PoK subfamily.

It carries out the reaction (R)-pantoate + ATP = (R)-4-phosphopantoate + ADP + H(+). Its pathway is cofactor biosynthesis; coenzyme A biosynthesis. In terms of biological role, phosphorylates (R)-pantoate to form (R)-4-phosphopantoate in the CoA biosynthesis pathway. ATP is the best phosphate donor. Can be replaced with UTP, with lower efficiency. The sequence is that of Pantoate kinase from Methanospirillum hungatei JF-1 (strain ATCC 27890 / DSM 864 / NBRC 100397 / JF-1).